Reading from the N-terminus, the 203-residue chain is Large ribosomal subunit protein bL25 (203 aa).

It belongs to the bacterial ribosomal protein bL25 family. CTC subfamily. In terms of assembly, part of the 50S ribosomal subunit; part of the 5S rRNA/L5/L18/L25 subcomplex. Contacts the 5S rRNA. Binds to the 5S rRNA independently of L5 and L18.

Its function is as follows. This is one of the proteins that binds to the 5S RNA in the ribosome where it forms part of the central protuberance. In Paraburkholderia phymatum (strain DSM 17167 / CIP 108236 / LMG 21445 / STM815) (Burkholderia phymatum), this protein is Large ribosomal subunit protein bL25.